An 807-amino-acid polypeptide reads, in one-letter code: AP-5 complex subunit zeta-1 (807 aa).

As to quaternary structure, probably part of the adaptor protein complex 5 (AP-5) a tetramer composed of AP5B1, AP5M1, AP5S1 and AP5Z1. Interacts with ZFYVE26 and SPG11.

It localises to the cytoplasm. The protein resides in the nucleus. In terms of biological role, as part of AP-5, a probable fifth adaptor protein complex it may be involved in endosomal transport. According to PubMed:20613862 it is a putative helicase required for efficient homologous recombination DNA double-strand break repair. In Homo sapiens (Human), this protein is AP-5 complex subunit zeta-1 (AP5Z1).